The following is a 369-amino-acid chain: Leucine carboxyl methyltransferase 1 (369 aa).

S-adenosyl-L-methionine-binding positions include R84, G108, D132, 187–188, and E215; that span reads DL.

The protein belongs to the methyltransferase superfamily. LCMT family.

The catalysed reaction is [phosphatase 2A protein]-C-terminal L-leucine + S-adenosyl-L-methionine = [phosphatase 2A protein]-C-terminal L-leucine methyl ester + S-adenosyl-L-homocysteine. Methylates the carboxyl group of the C-terminal leucine residue of protein phosphatase 2A catalytic subunits to form alpha-leucine ester residues. This chain is Leucine carboxyl methyltransferase 1 (PPM1), found in Debaryomyces hansenii (strain ATCC 36239 / CBS 767 / BCRC 21394 / JCM 1990 / NBRC 0083 / IGC 2968) (Yeast).